The following is a 311-amino-acid chain: Regulator of rDNA transcription protein 6 (311 aa).

Helical transmembrane passes span 32-52 and 271-291; these read PHLL…SAEL and YLIV…IIVT.

It is found in the membrane. In terms of biological role, may be involved in the modulation of rDNA transcription. The polypeptide is Regulator of rDNA transcription protein 6 (RRT6) (Saccharomyces cerevisiae (strain ATCC 204508 / S288c) (Baker's yeast)).